The following is a 26-amino-acid chain: Superoxide dismutase [Cu-Zn] (26 aa).

Cys7 carries the S-palmitoyl cysteine lipid modification.

This sequence belongs to the Cu-Zn superoxide dismutase family. As to quaternary structure, homotrimer. Requires Cu cation as cofactor. Zn(2+) is required as a cofactor.

It localises to the cytoplasm. The protein resides in the nucleus. It catalyses the reaction 2 superoxide + 2 H(+) = H2O2 + O2. In terms of biological role, destroys radicals which are normally produced within the cells and which are toxic to biological systems. The chain is Superoxide dismutase [Cu-Zn] (sod1) from Paralichthys olivaceus (Bastard halibut).